We begin with the raw amino-acid sequence, 340 residues long: Arginase 1, mitochondrial (340 aa).

Residues 1 to 24 (MGGVAAGTRWIHHVRRLSAAKVSA) constitute a mitochondrion transit peptide. Residues His159, Asp183, His185, and Asp187 each contribute to the Mn(2+) site. Residues 185–189 (HPDIY) and 193–195 (EGN) contribute to the substrate site. The Mn(2+) site is built by Asp268 and Asp270. Position 311 (Glu311) interacts with substrate.

This sequence belongs to the arginase family. Mn(2+) serves as cofactor.

The protein localises to the mitochondrion. The catalysed reaction is L-arginine + H2O = urea + L-ornithine. It functions in the pathway nitrogen metabolism; urea cycle; L-ornithine and urea from L-arginine: step 1/1. Functionally, catalyzes the hydrolysis of L-arginine to urea and L-ornithine. The latter can be utilized in the urea cycle or as a precursor for the synthesis of both polyamines and proline. This chain is Arginase 1, mitochondrial (ARG1), found in Oryza sativa subsp. japonica (Rice).